A 127-amino-acid chain; its full sequence is Cyclin-dependent kinase 2-associated protein 2 (127 aa).

The tract at residues 1-47 is disordered; sequence MSYKPIAPAPSSTPGSSTPGPGTPVPTAGSVPSPSGSVPGAAAPFRP. Over residues 9-44 the composition is skewed to low complexity; the sequence is APSSTPGSSTPGPGTPVPTAGSVPSPSGSVPGAAAP. Positions 65–107 are interaction with CDK2; sequence PPGSQGSQSTYTDLLSVIEEMGKEIRPTYAGSKSAMERLKRGI.

Belongs to the CDK2AP family. In terms of assembly, component of the nucleosome remodeling and deacetylase (NuRD) repressor complex, composed of core proteins MTA1, MTA2, MTA3, RBBP4, RBBP7, HDAC1, HDAC2, MBD2, MBD3, and peripherally associated proteins CDK2AP1, CDK2AP2, GATAD2A, GATAD2B, CHD3, CHD4 and CHD5. The exact stoichiometry of the NuRD complex is unknown, and some subunits such as MBD2 and MBD3, GATAD2A and GATAD2B, and CHD3, CHD4 and CHD5 define mutually exclusive NuRD complexes. Interacts with CDK2AP1. Interacts with CDK2. Interacts with MAPK1. Phosphorylated by MAPK1 and CDK2. As to expression, oocytes (at protein level).

Its subcellular location is the cytoplasm. The protein resides in the nucleus. Functionally, acts as a component of the histone deacetylase NuRD complex which participates in the remodeling of chromatin. Inhibits cell cycle G1/S phase transition by repressing CDK2 expression and activation; represses CDK2 activation by inhibiting its interaction with cyclin E and A. Plays a role in regulating the self-renewal of embryonic stem cells (ESCs) and in maintaining cell survival during terminal differentiation of ESCs. Regulates microtubule organization of metaphase II oocytes. The chain is Cyclin-dependent kinase 2-associated protein 2 (Cdk2ap2) from Mus musculus (Mouse).